We begin with the raw amino-acid sequence, 202 residues long: Transcription antitermination protein NusB (202 aa).

Residues 1–11 are compositionally biased toward basic and acidic residues; it reads MTEERTADNKA. Disordered stretches follow at residues 1 to 21 and 169 to 202; these read MTEE…KRHG and SAAK…SDEA.

The protein belongs to the NusB family.

In terms of biological role, involved in transcription antitermination. Required for transcription of ribosomal RNA (rRNA) genes. Binds specifically to the boxA antiterminator sequence of the ribosomal RNA (rrn) operons. This chain is Transcription antitermination protein NusB, found in Corynebacterium jeikeium (strain K411).